Consider the following 1023-residue polypeptide: StAR-related lipid transfer protein 8 (1023 aa).

2 disordered regions span residues 46-67 and 82-161; these read PMGS…SSCE and TVSL…KVSK. Over residues 99–114 the composition is skewed to polar residues; it reads PSSSDRPLLSPTQGQE. Serine 108 is subject to Phosphoserine. The segment covering 120–130 has biased composition (basic residues); it reads AKKRHRNRSFL. Residues 143 to 161 are compositionally biased toward polar residues; that stretch reads GSQQAEPKHSPATSEKVSK. At arginine 169 the chain carries Asymmetric dimethylarginine. Serine 235 and serine 238 each carry phosphoserine. A compositionally biased stretch (low complexity) spans 387-397; sequence PAQAPAEAEPV. Disordered regions lie at residues 387–461 and 467–486; these read PAQA…MNEA and LAGL…VGAS. Polar residues predominate over residues 441–459; it reads ISDTVASSSELDSSGNSMN. A phosphoserine mark is found at serine 498 and serine 506. The Rho-GAP domain occupies 573 to 777; the sequence is PPLIHVQRTG…HMISDCKKLF (205 aa). Positions 733-757 are disordered; the sequence is KKDSPSPRIKSKRSLIGRPGPRDLS. The region spanning 809–1017 is the START domain; it reads AQAAGVSLSL…RDSFPTLQAA (209 aa).

In terms of assembly, binds both the SH2 and PTB domains of TNS1. As to expression, widely expressed with highest levels in kidney, lung and placenta.

It localises to the cell junction. The protein resides in the focal adhesion. Its function is as follows. Accelerates GTPase activity of RHOA and CDC42, but not RAC1. Stimulates the hydrolysis of phosphatidylinositol 4,5-bisphosphate by PLCD1. This chain is StAR-related lipid transfer protein 8 (STARD8), found in Homo sapiens (Human).